The following is a 243-amino-acid chain: Leucyl/phenylalanyl-tRNA--protein transferase (243 aa).

Belongs to the L/F-transferase family.

Its subcellular location is the cytoplasm. It catalyses the reaction N-terminal L-lysyl-[protein] + L-leucyl-tRNA(Leu) = N-terminal L-leucyl-L-lysyl-[protein] + tRNA(Leu) + H(+). It carries out the reaction N-terminal L-arginyl-[protein] + L-leucyl-tRNA(Leu) = N-terminal L-leucyl-L-arginyl-[protein] + tRNA(Leu) + H(+). The enzyme catalyses L-phenylalanyl-tRNA(Phe) + an N-terminal L-alpha-aminoacyl-[protein] = an N-terminal L-phenylalanyl-L-alpha-aminoacyl-[protein] + tRNA(Phe). Functionally, functions in the N-end rule pathway of protein degradation where it conjugates Leu, Phe and, less efficiently, Met from aminoacyl-tRNAs to the N-termini of proteins containing an N-terminal arginine or lysine. This is Leucyl/phenylalanyl-tRNA--protein transferase from Vibrio cholerae serotype O1 (strain ATCC 39541 / Classical Ogawa 395 / O395).